The following is a 415-amino-acid chain: L-cysteine:1D-myo-inositol 2-amino-2-deoxy-alpha-D-glucopyranoside ligase (415 aa).

Cys-47 contacts Zn(2+). L-cysteinyl-5'-AMP-binding positions include 47–50 (CGIT), Thr-62, and 85–87 (NVT). The short motif at 49–59 (ITPYDATHLGH) is the 'HIGH' region element. The short motif at 190 to 195 (ERGGDP) is the 'ERGGDP' region element. Trp-230 is a binding site for L-cysteinyl-5'-AMP. Cys-234 is a Zn(2+) binding site. 252-254 (GSD) contacts L-cysteinyl-5'-AMP. His-259 serves as a coordination point for Zn(2+). Position 286 (Ile-286) interacts with L-cysteinyl-5'-AMP. Residues 292-296 (KMSKS) carry the 'KMSKS' region motif.

This sequence belongs to the class-I aminoacyl-tRNA synthetase family. MshC subfamily. In terms of assembly, monomer. It depends on Zn(2+) as a cofactor.

The enzyme catalyses 1D-myo-inositol 2-amino-2-deoxy-alpha-D-glucopyranoside + L-cysteine + ATP = 1D-myo-inositol 2-(L-cysteinylamino)-2-deoxy-alpha-D-glucopyranoside + AMP + diphosphate + H(+). Catalyzes the ATP-dependent condensation of GlcN-Ins and L-cysteine to form L-Cys-GlcN-Ins. In Mycolicibacterium paratuberculosis (strain ATCC BAA-968 / K-10) (Mycobacterium paratuberculosis), this protein is L-cysteine:1D-myo-inositol 2-amino-2-deoxy-alpha-D-glucopyranoside ligase (mshC).